We begin with the raw amino-acid sequence, 376 residues long: Alanine racemase (376 aa).

The active-site Proton acceptor; specific for D-alanine is lysine 40. Lysine 40 bears the N6-(pyridoxal phosphate)lysine mark. Arginine 138 contributes to the substrate binding site. The active-site Proton acceptor; specific for L-alanine is tyrosine 270. Residue methionine 317 participates in substrate binding.

The protein belongs to the alanine racemase family. It depends on pyridoxal 5'-phosphate as a cofactor.

The enzyme catalyses L-alanine = D-alanine. It participates in amino-acid biosynthesis; D-alanine biosynthesis; D-alanine from L-alanine: step 1/1. Catalyzes the interconversion of L-alanine and D-alanine. May also act on other amino acids. In Lactobacillus delbrueckii subsp. bulgaricus (strain ATCC BAA-365 / Lb-18), this protein is Alanine racemase (alr).